The sequence spans 521 residues: AAA ATPase forming ring-shaped complexes (521 aa).

A coiled-coil region spans residues 4 to 44 (TEDLAALNDRLMAKNHALAEALSRAGKELTKAKSQLAQLAQ). 235-240 (GNGKTM) contacts ATP.

The protein belongs to the AAA ATPase family. As to quaternary structure, homohexamer. Assembles into a hexameric ring structure.

This is AAA ATPase forming ring-shaped complexes from Bifidobacterium longum (strain DJO10A).